The following is a 59-amino-acid chain: Large ribosomal subunit protein uL30 (59 aa).

The protein belongs to the universal ribosomal protein uL30 family. In terms of assembly, part of the 50S ribosomal subunit.

The chain is Large ribosomal subunit protein uL30 from Geobacter metallireducens (strain ATCC 53774 / DSM 7210 / GS-15).